The chain runs to 556 residues: Arginine--tRNA ligase 1 (556 aa).

The short motif at 132–142 is the 'HIGH' region element; the sequence is ANPTGDLHLGH.

It belongs to the class-I aminoacyl-tRNA synthetase family. In terms of assembly, monomer.

The protein localises to the cytoplasm. The enzyme catalyses tRNA(Arg) + L-arginine + ATP = L-arginyl-tRNA(Arg) + AMP + diphosphate. The polypeptide is Arginine--tRNA ligase 1 (Bacillus anthracis).